The sequence spans 393 residues: tRNA-specific 2-thiouridylase MnmA (393 aa).

ATP-binding positions include Ala-19–Ser-26 and Leu-45. Cys-113 functions as the Nucleophile in the catalytic mechanism. A disulfide bridge links Cys-113 with Cys-210. Residue Gly-137 coordinates ATP. The interaction with tRNA stretch occupies residues Arg-160–Gln-162. Cys-210 (cysteine persulfide intermediate) is an active-site residue.

The protein belongs to the MnmA/TRMU family.

It localises to the cytoplasm. The catalysed reaction is S-sulfanyl-L-cysteinyl-[protein] + uridine(34) in tRNA + AH2 + ATP = 2-thiouridine(34) in tRNA + L-cysteinyl-[protein] + A + AMP + diphosphate + H(+). Functionally, catalyzes the 2-thiolation of uridine at the wobble position (U34) of tRNA, leading to the formation of s(2)U34. The chain is tRNA-specific 2-thiouridylase MnmA from Afipia carboxidovorans (strain ATCC 49405 / DSM 1227 / KCTC 32145 / OM5) (Oligotropha carboxidovorans).